The chain runs to 379 residues: Chaperone protein DnaJ (379 aa).

One can recognise a J domain in the interval 6 to 71 (DYYEVLGVDK…QKRSRYDQFG (66 aa)). The CR-type zinc finger occupies 138-220 (GVEREINVSK…CNGKGRLRST (83 aa)). Zn(2+) is bound by residues cysteine 151, cysteine 154, cysteine 168, cysteine 171, cysteine 194, cysteine 197, cysteine 208, and cysteine 211. 4 CXXCXGXG motif repeats span residues 151–158 (CSKCTGSG), 168–175 (CNHCNGTG), 194–201 (CDACKGEG), and 208–215 (CPACNGKG).

It belongs to the DnaJ family. As to quaternary structure, homodimer. Requires Zn(2+) as cofactor.

The protein localises to the cytoplasm. Participates actively in the response to hyperosmotic and heat shock by preventing the aggregation of stress-denatured proteins and by disaggregating proteins, also in an autonomous, DnaK-independent fashion. Unfolded proteins bind initially to DnaJ; upon interaction with the DnaJ-bound protein, DnaK hydrolyzes its bound ATP, resulting in the formation of a stable complex. GrpE releases ADP from DnaK; ATP binding to DnaK triggers the release of the substrate protein, thus completing the reaction cycle. Several rounds of ATP-dependent interactions between DnaJ, DnaK and GrpE are required for fully efficient folding. Also involved, together with DnaK and GrpE, in the DNA replication of plasmids through activation of initiation proteins. The chain is Chaperone protein DnaJ from Ruminiclostridium cellulolyticum (strain ATCC 35319 / DSM 5812 / JCM 6584 / H10) (Clostridium cellulolyticum).